The sequence spans 317 residues: 4-hydroxy-3-methylbut-2-enyl diphosphate reductase (317 aa).

Cys-12 contributes to the [4Fe-4S] cluster binding site. Positions 43 and 81 each coordinate (2E)-4-hydroxy-3-methylbut-2-enyl diphosphate. Residues His-43 and His-81 each contribute to the dimethylallyl diphosphate site. Isopentenyl diphosphate contacts are provided by His-43 and His-81. [4Fe-4S] cluster is bound at residue Cys-103. Position 131 (His-131) interacts with (2E)-4-hydroxy-3-methylbut-2-enyl diphosphate. His-131 lines the dimethylallyl diphosphate pocket. His-131 lines the isopentenyl diphosphate pocket. Glu-133 functions as the Proton donor in the catalytic mechanism. Thr-172 provides a ligand contact to (2E)-4-hydroxy-3-methylbut-2-enyl diphosphate. Residue Cys-200 coordinates [4Fe-4S] cluster. Ser-228, Asn-230, and Ser-273 together coordinate (2E)-4-hydroxy-3-methylbut-2-enyl diphosphate. Residues Ser-228, Asn-230, and Ser-273 each coordinate dimethylallyl diphosphate. Isopentenyl diphosphate contacts are provided by Ser-228, Asn-230, and Ser-273.

It belongs to the IspH family. [4Fe-4S] cluster serves as cofactor.

It carries out the reaction isopentenyl diphosphate + 2 oxidized [2Fe-2S]-[ferredoxin] + H2O = (2E)-4-hydroxy-3-methylbut-2-enyl diphosphate + 2 reduced [2Fe-2S]-[ferredoxin] + 2 H(+). It catalyses the reaction dimethylallyl diphosphate + 2 oxidized [2Fe-2S]-[ferredoxin] + H2O = (2E)-4-hydroxy-3-methylbut-2-enyl diphosphate + 2 reduced [2Fe-2S]-[ferredoxin] + 2 H(+). The protein operates within isoprenoid biosynthesis; dimethylallyl diphosphate biosynthesis; dimethylallyl diphosphate from (2E)-4-hydroxy-3-methylbutenyl diphosphate: step 1/1. It participates in isoprenoid biosynthesis; isopentenyl diphosphate biosynthesis via DXP pathway; isopentenyl diphosphate from 1-deoxy-D-xylulose 5-phosphate: step 6/6. In terms of biological role, catalyzes the conversion of 1-hydroxy-2-methyl-2-(E)-butenyl 4-diphosphate (HMBPP) into a mixture of isopentenyl diphosphate (IPP) and dimethylallyl diphosphate (DMAPP). Acts in the terminal step of the DOXP/MEP pathway for isoprenoid precursor biosynthesis. The sequence is that of 4-hydroxy-3-methylbut-2-enyl diphosphate reductase from Exiguobacterium sp. (strain ATCC BAA-1283 / AT1b).